The primary structure comprises 886 residues: DNA mismatch repair protein MutS (886 aa).

641–648 serves as a coordination point for ATP; that stretch reads GPNMAGKS.

The protein belongs to the DNA mismatch repair MutS family.

Its function is as follows. This protein is involved in the repair of mismatches in DNA. It is possible that it carries out the mismatch recognition step. This protein has a weak ATPase activity. This is DNA mismatch repair protein MutS from Rickettsia rickettsii (strain Sheila Smith).